Reading from the N-terminus, the 132-residue chain is Transcription antitermination protein NusB (132 aa).

It belongs to the NusB family.

Functionally, involved in transcription antitermination. Required for transcription of ribosomal RNA (rRNA) genes. Binds specifically to the boxA antiterminator sequence of the ribosomal RNA (rrn) operons. The polypeptide is Transcription antitermination protein NusB (Campylobacter jejuni subsp. doylei (strain ATCC BAA-1458 / RM4099 / 269.97)).